The sequence spans 159 residues: Ribosomal RNA large subunit methyltransferase H (159 aa).

S-adenosyl-L-methionine is bound by residues leucine 76, glycine 108, and 127–132 (FGLLTF).

This sequence belongs to the RNA methyltransferase RlmH family. As to quaternary structure, homodimer.

It is found in the cytoplasm. It carries out the reaction pseudouridine(1915) in 23S rRNA + S-adenosyl-L-methionine = N(3)-methylpseudouridine(1915) in 23S rRNA + S-adenosyl-L-homocysteine + H(+). Its function is as follows. Specifically methylates the pseudouridine at position 1915 (m3Psi1915) in 23S rRNA. This is Ribosomal RNA large subunit methyltransferase H from Streptococcus thermophilus (strain CNRZ 1066).